The chain runs to 702 residues: Polyribonucleotide nucleotidyltransferase (702 aa).

The Mg(2+) site is built by aspartate 485 and aspartate 491. In terms of domain architecture, KH spans 552 to 612 (PRTEIICIDP…EGVKKAISII (61 aa)). The S1 motif domain occupies 622 to 690 (GEIYLGKVTK…NQGRINLSRK (69 aa)).

The protein belongs to the polyribonucleotide nucleotidyltransferase family. Requires Mg(2+) as cofactor.

It localises to the cytoplasm. The catalysed reaction is RNA(n+1) + phosphate = RNA(n) + a ribonucleoside 5'-diphosphate. Its function is as follows. Involved in mRNA degradation. Catalyzes the phosphorolysis of single-stranded polyribonucleotides processively in the 3'- to 5'-direction. The polypeptide is Polyribonucleotide nucleotidyltransferase (Clostridium botulinum (strain Kyoto / Type A2)).